Consider the following 49-residue polypeptide: Large ribosomal subunit protein eL40 (49 aa).

The protein belongs to the eukaryotic ribosomal protein eL40 family.

This is Large ribosomal subunit protein eL40 from Methanococcoides burtonii (strain DSM 6242 / NBRC 107633 / OCM 468 / ACE-M).